A 539-amino-acid chain; its full sequence is Chitin deacetylase 1 (539 aa).

An N-terminal signal peptide occupies residues 1–23 (MARYARVATLAACLLFACALADG). Positions 42–104 (QELCKDKDAG…WKDAVKNCKL (63 aa)) constitute a Chitin-binding type-2 domain. 6 disulfide bridges follow: C80-C93, C122-C134, C129-C147, C141-C156, C168-C180, and C173-C178. In terms of domain architecture, LDL-receptor class A spans 121–157 (LCQDGFLACGDSTCIERGLFCNGEKDCGDGSDENSCD). D206 provides a ligand contact to Zn(2+). Disulfide bonds link C230/C489, C354/C361, C391/C397, C497/C520, and C503/C523. N244 is a glycosylation site (N-linked (GlcNAc...) asparagine). Residues H261 and H265 each contribute to the Zn(2+) site. An N-linked (GlcNAc...) asparagine glycan is attached at N296.

This sequence belongs to the carbohydrate esterase 4 (CE4) family. Interacts with CPAP3-A1. Requires Zn(2+) as cofactor. Highly expressed in epidermis and head. Moderate expression levels in fat body, Malpighian tubule, testis and midgut. Low expression in silk gland and ovary.

Its subcellular location is the secreted. The enzyme catalyses [(1-&gt;4)-N-acetyl-beta-D-glucosaminyl](n) + n H2O = chitosan + n acetate. Binding to the accessory protein CPAP3-A1 is essential for chitinase activity. In terms of biological role, hydrolyzes the N-acetamido groups of N-acetyl-D-glucosamine residues in chitin. The protein is Chitin deacetylase 1 of Bombyx mori (Silk moth).